Consider the following 146-residue polypeptide: Hemoglobin subunit beta (146 aa).

The Globin domain occupies 2–146; the sequence is HWTAEEKQLI…VAHALARKYH (145 aa). His-63 and His-92 together coordinate heme b.

It belongs to the globin family. In terms of assembly, heterotetramer of two alpha chains and two beta chains. As to expression, red blood cells.

Involved in oxygen transport from the lung to the various peripheral tissues. The sequence is that of Hemoglobin subunit beta (HBB) from Ciconia ciconia (White stork).